The primary structure comprises 218 residues: Octanoyltransferase (218 aa).

In terms of domain architecture, BPL/LPL catalytic spans 27-210 (AGAEETLYLL…QFRAIFADST (184 aa)). Substrate is bound by residues 72–79 (RGGNITCH), 139–141 (SIG), and 152–154 (GFA). The Acyl-thioester intermediate role is filled by C170.

It belongs to the LipB family.

It is found in the cytoplasm. The catalysed reaction is octanoyl-[ACP] + L-lysyl-[protein] = N(6)-octanoyl-L-lysyl-[protein] + holo-[ACP] + H(+). It participates in protein modification; protein lipoylation via endogenous pathway; protein N(6)-(lipoyl)lysine from octanoyl-[acyl-carrier-protein]: step 1/2. Catalyzes the transfer of endogenously produced octanoic acid from octanoyl-acyl-carrier-protein onto the lipoyl domains of lipoate-dependent enzymes. Lipoyl-ACP can also act as a substrate although octanoyl-ACP is likely to be the physiological substrate. This chain is Octanoyltransferase, found in Nitratidesulfovibrio vulgaris (strain DSM 19637 / Miyazaki F) (Desulfovibrio vulgaris).